A 246-amino-acid chain; its full sequence is Exosome complex component Rrp41 (246 aa).

It belongs to the RNase PH family. Rrp41 subfamily. As to quaternary structure, component of the archaeal exosome complex. Forms a hexameric ring-like arrangement composed of 3 Rrp41-Rrp42 heterodimers. The hexameric ring associates with a trimer of Rrp4 and/or Csl4 subunits.

It localises to the cytoplasm. In terms of biological role, catalytic component of the exosome, which is a complex involved in RNA degradation. Has 3'-&gt;5' exoribonuclease activity. Can also synthesize heteromeric RNA-tails. The protein is Exosome complex component Rrp41 of Pyrobaculum neutrophilum (strain DSM 2338 / JCM 9278 / NBRC 100436 / V24Sta) (Thermoproteus neutrophilus).